The following is an 87-amino-acid chain: U3-theraphotoxin-Hhn1a 8 (87 aa).

An N-terminal signal peptide occupies residues 1 to 24; sequence MVNMKASMFLTFAGLVLLFVVCYA. The propeptide occupies 25 to 52; that stretch reads SGSEEKEFPKEMLSSIFAVDNDFKQEER. Disulfide bonds link Cys-54–Cys-67, Cys-61–Cys-72, and Cys-66–Cys-79.

The protein belongs to the neurotoxin 10 (Hwtx-1) family. 51 (Hntx-8) subfamily. Hntx-8 sub-subfamily. In terms of tissue distribution, expressed by the venom gland.

The protein resides in the secreted. Ion channel inhibitor. In Cyriopagopus hainanus (Chinese bird spider), this protein is U3-theraphotoxin-Hhn1a 8.